An 854-amino-acid chain; its full sequence is Nucleolar MIF4G domain-containing protein 1 homolog (854 aa).

4 disordered regions span residues 1–38 (MAKIKKKEAKAKPLTRKEQRKQKSEFKKQNKRLYFAGK), 55–105 (QSQL…DAEV), 120–161 (PLGK…KQRI), and 217–306 (RKWE…RDAE). Over residues 15 to 28 (TRKEQRKQKSEFKK) the composition is skewed to basic and acidic residues. Residues 60-71 (KNKKKKRSKKPK) show a composition bias toward basic residues. Over residues 88-105 (IDSDDDESIDSDFSDAEV) the composition is skewed to acidic residues. Basic and acidic residues-rich tracts occupy residues 135-156 (RQDEEAVRRKELRQQKELESKS) and 217-238 (RKWEEKQERKKKLKEQQEKEEA). The segment covering 242-289 (SDEEEDKEDRDEPMDNFSEDDSGSEGEDDDEDLTGEEEQSEEDSEQEE) has biased composition (acidic residues). Positions 290 to 306 (NAPKIKEDIYGRKRDAE) are enriched in basic and acidic residues. The 202-residue stretch at 352–553 (LKQCKGLLNR…DILNAVKNNN (202 aa)) folds into the MIF4G domain. Residues 650-764 (AERRNIFCII…QLSVLKVVDF (115 aa)) form the MI domain.

Belongs to the CWC22 family.

It localises to the nucleus. It is found in the nucleolus. This Drosophila melanogaster (Fruit fly) protein is Nucleolar MIF4G domain-containing protein 1 homolog.